Consider the following 836-residue polypeptide: Protein O-mannosyl-transferase tmtc2 (836 aa).

A helical membrane pass occupies residues 1–21 (MIAELLSSALGLLLYLNTLGA). Residues 22–77 (DFCYDDSRAIKTNQDLLPETPWNHIFFNDFWGTLLTHSGSHKSYRPLCTLSFRLNY) are Extracellular-facing. A helical membrane pass occupies residues 78–98 (LFGGLDPWNYHLVNVLLHSAV). Residues 99–107 (TGLFTNLCK) lie on the Cytoplasmic side of the membrane. A helical membrane pass occupies residues 108 to 128 (ALFGSGCWTLIAGLLFASHPI). The Extracellular portion of the chain corresponds to 129–132 (HTEA). The helical transmembrane segment at 133 to 153 (VSGIVGRADVGSGLFFLLSLL) threads the bilayer. The Cytoplasmic segment spans residues 154–164 (CYMKHCSTRGY). The helical transmembrane segment at 165–185 (SLSSWCWILCAGFWAACSMLW) threads the bilayer. Topologically, residues 186–188 (KEQ) are extracellular. Residues 189–209 (GVTVLAVSAVYDVFVFHKLKM) traverse the membrane as a helical segment. At 210 to 220 (NQIISVVFKEK) the chain is on the cytoplasmic side. Residues 221–241 (NVSFFFSVGLLFAWGVILLGA) form a helical membrane-spanning segment. Topologically, residues 242–312 (RFYWMGNTPP…KTITDWRNIH (71 aa)) are extracellular. A helical membrane pass occupies residues 313–333 (TVAFYILLILLAYSSLKGSAI). Over 334-392 (KRDCNGKVFMNGKQNTNGHSCQSDLEHKNAEQNPVIASKLENGVKHHNSHEMQLPSTEN) the chain is Cytoplasmic. The chain crosses the membrane as a helical span at residues 393-413 (IVVLALSLLIVPFVPASNLFF). Y414 is a topological domain (extracellular). A helical transmembrane segment spans residues 415-435 (VGFVIAERVLYIPSMGFCLLV). The Cytoplasmic segment spans residues 436-449 (TVGARALYIKAQKN). The helical transmembrane segment at 450–470 (ILKNLLFYATAALIVFYGLKT) threads the bilayer. Residues 471 to 836 (VVRNGDWKNE…EKQGLKNSKT (366 aa)) lie on the Extracellular side of the membrane. TPR repeat units follow at residues 493 to 526 (AKAW…RSNM), 527 to 560 (ADML…RPTL), 561 to 594 (ASGY…PDEN), 606 to 639 (TSCL…MPRQ), 643 to 676 (QSLY…KPDH), 677 to 710 (IPAH…DPNK), 711 to 744 (GNCY…DSSE), 745 to 778 (FDVV…RQNY), and 779 to 812 (PAAL…KPDD).

The protein belongs to the TMTC family.

It localises to the membrane. It is found in the endoplasmic reticulum. It carries out the reaction a di-trans,poly-cis-dolichyl beta-D-mannosyl phosphate + L-seryl-[protein] = 3-O-(alpha-D-mannosyl)-L-seryl-[protein] + a di-trans,poly-cis-dolichyl phosphate + H(+). The catalysed reaction is a di-trans,poly-cis-dolichyl beta-D-mannosyl phosphate + L-threonyl-[protein] = 3-O-(alpha-D-mannosyl)-L-threonyl-[protein] + a di-trans,poly-cis-dolichyl phosphate + H(+). Its pathway is protein modification; protein glycosylation. Functionally, transfers mannosyl residues to the hydroxyl group of serine or threonine residues. This is Protein O-mannosyl-transferase tmtc2 (tmtc2) from Xenopus laevis (African clawed frog).